The chain runs to 312 residues: Ribosomal protein L11 methyltransferase (312 aa).

4 residues coordinate S-adenosyl-L-methionine: Thr-162, Gly-183, Asp-205, and Asn-248.

Belongs to the methyltransferase superfamily. PrmA family.

The protein resides in the cytoplasm. It catalyses the reaction L-lysyl-[protein] + 3 S-adenosyl-L-methionine = N(6),N(6),N(6)-trimethyl-L-lysyl-[protein] + 3 S-adenosyl-L-homocysteine + 3 H(+). In terms of biological role, methylates ribosomal protein L11. In Exiguobacterium sp. (strain ATCC BAA-1283 / AT1b), this protein is Ribosomal protein L11 methyltransferase.